The following is a 959-amino-acid chain: Protein SEY1 homolog 1 (959 aa).

The Cytoplasmic portion of the chain corresponds to 1–767 (MQESDVFHNQ…ELAAITVHSK (767 aa)). Positions 9–86 (NQLRVEMLKK…EEEKKEKENY (78 aa)) form a coiled coil. The disordered stretch occupies residues 62–81 (EEKENMKVEEEEIKEEEEKK). The GB1/RHD3-type G domain occupies 123–340 (GFNYNMLSIL…NQNTYFRPIY (218 aa)). 133-140 (GPQNSGKS) provides a ligand contact to GTP. Residues 768-788 (TPMWLILLIAFLSFDNIVYVF) form a helical membrane-spanning segment. At 789-791 (KSP) the chain is on the lumenal side. Residues 792–812 (TLLALTLIIIGIIYSLNKIGY) form a helical membrane-spanning segment. The Cytoplasmic portion of the chain corresponds to 813-959 (AYLIDSVISY…LNKIKEANEF (147 aa)). Positions 849–868 (EAPKRKRPQKKTQDDKPKSS) are disordered.

The protein belongs to the TRAFAC class dynamin-like GTPase superfamily. GB1/RHD3 GTPase family. RHD3 subfamily.

The protein resides in the endoplasmic reticulum membrane. Probable GTP-binding protein that may be involved in cell development. The chain is Protein SEY1 homolog 1 from Entamoeba histolytica (strain ATCC 30459 / HM-1:IMSS / ABRM).